We begin with the raw amino-acid sequence, 431 residues long: Adenylosuccinate synthetase 2 (431 aa).

Residues 13-19 (GDEGKGK) and 41-43 (GHT) contribute to the GTP site. Asp-14 acts as the Proton acceptor in catalysis. Mg(2+) is bound by residues Asp-14 and Gly-41. Residues 14–17 (DEGK), 39–42 (NAGH), Thr-130, Arg-144, Gln-225, Thr-240, and Arg-304 contribute to the IMP site. His-42 (proton donor) is an active-site residue. Residue 300-306 (SVTGRPR) coordinates substrate. GTP contacts are provided by residues Arg-306, 332 to 334 (KLD), and 414 to 416 (STG).

The protein belongs to the adenylosuccinate synthetase family. In terms of assembly, homodimer. Requires Mg(2+) as cofactor.

It is found in the cytoplasm. It carries out the reaction IMP + L-aspartate + GTP = N(6)-(1,2-dicarboxyethyl)-AMP + GDP + phosphate + 2 H(+). It functions in the pathway purine metabolism; AMP biosynthesis via de novo pathway; AMP from IMP: step 1/2. Plays an important role in the de novo pathway of purine nucleotide biosynthesis. Catalyzes the first committed step in the biosynthesis of AMP from IMP. The protein is Adenylosuccinate synthetase 2 of Chromobacterium violaceum (strain ATCC 12472 / DSM 30191 / JCM 1249 / CCUG 213 / NBRC 12614 / NCIMB 9131 / NCTC 9757 / MK).